We begin with the raw amino-acid sequence, 181 residues long: Protein Syd (181 aa).

The protein belongs to the Syd family.

It is found in the cell inner membrane. In terms of biological role, interacts with the SecY protein in vivo. May bind preferentially to an uncomplexed state of SecY, thus functioning either as a chelating agent for excess SecY in the cell or as a regulatory factor that negatively controls the translocase function. This is Protein Syd from Salmonella arizonae (strain ATCC BAA-731 / CDC346-86 / RSK2980).